A 33-amino-acid chain; its full sequence is DELTA-pseudomyrmecitoxin-Pp1a subunit B (33 aa).

Heterodimer composed of subunit A and subunit B (DELTA-PSDTX-Pp1a); disulfide-linked. Expressed by the venom gland.

The protein localises to the secreted. Its function is as follows. This heterodimer has insecticidal and cytotoxic properties. Induces immediate paralysis when injected into blowflies (Lucilia cuprina), and then death within 24 hours. Also inhibits the growth of Aedes albopictus mosquito C6/36 cells. This chain is DELTA-pseudomyrmecitoxin-Pp1a subunit B, found in Pseudomyrmex penetrator (Ant).